The primary structure comprises 146 residues: Hemoglobin subunit beta (146 aa).

The Globin domain occupies 2–146 (HWSAEEKQLI…VAHALARKYH (145 aa)). Residues His63 and His92 each contribute to the heme b site.

Belongs to the globin family. As to quaternary structure, heterotetramer of two alpha chains and two beta chains. As to expression, red blood cells.

In terms of biological role, involved in oxygen transport from the lung to the various peripheral tissues. The sequence is that of Hemoglobin subunit beta (HBB) from Phoenicopterus ruber (American flamingo).